Consider the following 77-residue polypeptide: Putative snRNP Sm-like protein (77 aa).

The region spanning 8-77 (PTLRMMLDYV…DSVVVITPAA (70 aa)) is the Sm domain.

It belongs to the snRNP Sm proteins family.

In Aeropyrum pernix (strain ATCC 700893 / DSM 11879 / JCM 9820 / NBRC 100138 / K1), this protein is Putative snRNP Sm-like protein.